Here is a 393-residue protein sequence, read N- to C-terminus: Elongation factor Tu (393 aa).

One can recognise a tr-type G domain in the interval 10-203 (KPHVNIGTIG…AVDDYIPEPV (194 aa)). The segment at 19–26 (GHVDHGKT) is G1. A GTP-binding site is contributed by 19-26 (GHVDHGKT). Threonine 26 is a Mg(2+) binding site. Positions 60–64 (GITIS) are G2. Positions 81–84 (DCPG) are G3. GTP-binding positions include 81-85 (DCPGH) and 136-139 (NKVD). Positions 136–139 (NKVD) are G4. The G5 stretch occupies residues 173-175 (SAL).

The protein belongs to the TRAFAC class translation factor GTPase superfamily. Classic translation factor GTPase family. EF-Tu/EF-1A subfamily. As to quaternary structure, monomer.

Its subcellular location is the cytoplasm. It catalyses the reaction GTP + H2O = GDP + phosphate + H(+). GTP hydrolase that promotes the GTP-dependent binding of aminoacyl-tRNA to the A-site of ribosomes during protein biosynthesis. The sequence is that of Elongation factor Tu from Chlorobium phaeobacteroides (strain BS1).